The primary structure comprises 348 residues: Anthranilate phosphoribosyltransferase (348 aa).

5-phospho-alpha-D-ribose 1-diphosphate contacts are provided by residues G83, 86-87 (GD), T91, 93-96 (NVST), 111-119 (KHGNRAASS), and T123. G83 is a binding site for anthranilate. Position 95 (S95) interacts with Mg(2+). An anthranilate-binding site is contributed by N114. Residue R169 participates in anthranilate binding. Positions 227 and 228 each coordinate Mg(2+).

It belongs to the anthranilate phosphoribosyltransferase family. Homodimer. Mg(2+) serves as cofactor.

It carries out the reaction N-(5-phospho-beta-D-ribosyl)anthranilate + diphosphate = 5-phospho-alpha-D-ribose 1-diphosphate + anthranilate. The protein operates within amino-acid biosynthesis; L-tryptophan biosynthesis; L-tryptophan from chorismate: step 2/5. Its function is as follows. Catalyzes the transfer of the phosphoribosyl group of 5-phosphorylribose-1-pyrophosphate (PRPP) to anthranilate to yield N-(5'-phosphoribosyl)-anthranilate (PRA). In Thermobifida fusca (strain YX), this protein is Anthranilate phosphoribosyltransferase.